Consider the following 869-residue polypeptide: Rho GTPase-activating protein 27 (869 aa).

The SH3 domain maps to Glu6–Ala69. The residue at position 28 (Ala28) is a Phosphotyrosine. A disordered region spans residues Gly104 to Leu134. A phosphoserine mark is found at Ser155, Ser215, and Ser249. 2 disordered regions span residues Arg208–Ser300 and Glu331–Cys401. Positions Cys209–Asp220 are enriched in basic and acidic residues. The segment covering Arg235–Pro250 has biased composition (low complexity). The 35-residue stretch at Pro246–Glu280 folds into the WW 1 domain. The segment covering Glu283 to Ser294 has biased composition (polar residues). The WW 2 domain occupies Glu299–Glu333. The span at Met345 to Gln356 shows a compositional bias: polar residues. The residue at position 350 (Ser350) is a Phosphoserine. Positions Gln414–Val447 constitute a WW 3 domain. Disordered regions lie at residues Ile449–Thr477 and Glu623–Ser642. Residues Ser459 and Ser462 each carry the phosphoserine modification. Position 464 is a phosphothreonine (Thr464). Ser469 carries the post-translational modification Phosphoserine. One can recognise a PH domain in the interval Thr477–Ser593. Ser632 and Ser636 each carry phosphoserine. In terms of domain architecture, Rho-GAP spans Cys677–Phe866.

As to quaternary structure, interacts with SH3KBP1/CIN85. Widely expressed. Highly expressed in kidney, lung, small intestine and thymus.

It is found in the cytoplasm. It localises to the membrane. In terms of biological role, rho GTPase-activating protein which may be involved in clathrin-mediated endocytosis. GTPase activators for the Rho-type GTPases act by converting them to an inactive GDP-bound state. Has activity toward CDC42 and RAC1. The chain is Rho GTPase-activating protein 27 (Arhgap27) from Mus musculus (Mouse).